The chain runs to 259 residues: Short chain dehydrogenase ausX (259 aa).

Residues Ile-13, Asp-59, Arg-121, Tyr-153, Lys-157, and Val-186 each contribute to the NADP(+) site. Tyr-153 functions as the Proton acceptor in the catalytic mechanism. The active-site Proton donor is the Tyr-153. The Lowers pKa of active site Tyr role is filled by Lys-157.

This sequence belongs to the short-chain dehydrogenases/reductases (SDR) family.

The protein operates within secondary metabolite biosynthesis; terpenoid biosynthesis. Its function is as follows. Short chain dehydrogenase; part of the gene cluster A that mediates the biosynthesis of the fungal meroterpenoid acetoxydehydroaustin. The first step of the pathway is the synthesis of 3,5-dimethylorsellinic acid by the polyketide synthase ausA. 3,5-dimethylorsellinic acid is then prenylated by the polyprenyl transferase ausN. Further epoxidation by the FAD-dependent monooxygenase ausM and cyclization by the probable terpene cyclase ausL lead to the formation of protoaustinoid A. Protoaustinoid A is then oxidized to spiro-lactone preaustinoid A3 by the combined action of the FAD-binding monooxygenases ausB and ausC, and the dioxygenase ausE. Acid-catalyzed keto-rearrangement and ring contraction of the tetraketide portion of preaustinoid A3 by ausJ lead to the formation of preaustinoid A4. The aldo-keto reductase ausK, with the help of ausH, is involved in the next step by transforming preaustinoid A4 into isoaustinone which is in turn hydroxylated by the P450 monooxygenase ausI to form austinolide. The cytochrome P450 monooxygenase ausG then modifies austinolide to austinol. Austinol is further acetylated to austin by the O-acetyltransferase ausP, which spontaneously changes to dehydroaustin. The cytochrome P450 monooxygenase then converts dehydroaustin is into 7-dehydrodehydroaustin. The hydroxylation catalyzed by ausR permits the second O-acetyltransferase ausQ to add an additional acetyl group to the molecule, leading to the formation of acetoxydehydroaustin. Due to genetic rearrangements of the clusters and the subsequent loss of some enzymes, the end product of the Penicillium brasilianum austinoid biosynthesis clusters is acetoxydehydroaustin. In Penicillium brasilianum, this protein is Short chain dehydrogenase ausX.